A 319-amino-acid polypeptide reads, in one-letter code: G-protein coupled receptor 171 (319 aa).

Topologically, residues 1–21 (MTNSSTFCPVYRDLEPFTYFF) are extracellular. Asn-3 carries an N-linked (GlcNAc...) asparagine glycan. Residues 22 to 42 (YLVFLIGIIGSCFATWAFIQK) form a helical membrane-spanning segment. Residues 43-48 (NTNHRC) are Cytoplasmic-facing. The chain crosses the membrane as a helical span at residues 49 to 69 (VSIYLINLLTADFLLTLALPV). Residues 70 to 89 (KITVDLGVAPWKLRIFHCQV) lie on the Extracellular side of the membrane. Residues 90–110 (TACLIYINMYLSIIFLAFVSI) form a helical membrane-spanning segment. Topologically, residues 111-132 (DRCLQLTYSCKIYRIQEPGFAK) are cytoplasmic. A helical membrane pass occupies residues 133–153 (MISAVVWLMVLLIMVPNMIIP). At 154 to 181 (IKDIKEKPNVGCMEFKSEFGRNWHLLTN) the chain is on the extracellular side. Residues 182–202 (FISIAIFFNFSAIILISNCLV) form a helical membrane-spanning segment. Residues 203–224 (IRQLYRNKDNENYPNVKRALIS) lie on the Cytoplasmic side of the membrane. A helical membrane pass occupies residues 225-245 (ILLVTTGYIICFVPYHIVRIP). At 246-268 (YTLSQTEVISDCSTRISLFKAKE) the chain is on the extracellular side. Residues 269-289 (ATLLLAVSNLCFDPILYYHLS) form a helical membrane-spanning segment. The Cytoplasmic segment spans residues 290–319 (KAFRLKITETFASHKESKAQKEKPRSENNA).

The protein belongs to the G-protein coupled receptor 1 family.

It is found in the cell membrane. In terms of biological role, G-protein coupled receptor for Big LEN, a 16-amino acid neuropeptide produced from the precursor protein, proSAAS (encoded by PCSK1N). Acts through a G(i)-alpha-mediated pathway in response to bigLEN. Big LEN-GPR171 system plays an important role in regulating feeding and metabolism. Also plays a role in modulating fear and anxiety-like behaviors in the basolateral amygdala. Big LEN-GPR171 modulates the mu-type opioid receptor signaling and antinociception. Acts as a negative regulator T cell function. This Bos taurus (Bovine) protein is G-protein coupled receptor 171 (GPR171).